The sequence spans 342 residues: MSINIEQAIIHEISQDSQGQLRCRLRPQPLLNSQAVEMMLEELHQTYTSKSGKGFGYFGIHGDDGEANPAFSNALQEYRAGDLGFVEFTGQASKLLQEELAKYDFSQGGFLLMSCYTSMASDFLFVALLSAKSSMTVLDDMELSQNNHLDLSNIQLAARIDLTEWQADKDSRKYISFIRGRAGRKVADFFLDFMGCVEGVNTKAQNKTLMNAVEDFVASSDLTKEERQQCRNKVFEYCSERFDEGADIEIKDLADELADQGMESFYDFARGGCYELDEEFPADKSTLRQLKKFSGTGGGVTISFDGGHLGQRVIYDPISDTLLIKGVPANLKDQLDRRLKGE.

Belongs to the YejK family.

The protein localises to the cytoplasm. It localises to the nucleoid. This chain is Nucleoid-associated protein Shewmr7_2293, found in Shewanella sp. (strain MR-7).